We begin with the raw amino-acid sequence, 127 residues long: MMRQSVQTVLPESTGNNTLSLRDSVCRDLFQLFSSPHSPLPILLVSGMPEWQGHNQSDKLLQSWYCRQLRSALLFHEPRIAALQVNLKEAYCHELAISLEMMLYHDDEPLTFDLVWQKGSWHRTMPQ.

This sequence belongs to the GpW/Gp25 family. IraD subfamily. Interacts with RssB.

The protein resides in the cytoplasm. In terms of biological role, inhibits RpoS proteolysis by regulating RssB activity, thereby increasing the stability of the sigma stress factor RpoS during oxidative stress. Its effect on RpoS stability is due to its interaction with RssB, which probably blocks the interaction of RssB with RpoS, and the consequent delivery of the RssB-RpoS complex to the ClpXP protein degradation pathway. The polypeptide is Anti-adapter protein IraD (Escherichia coli O6:H1 (strain CFT073 / ATCC 700928 / UPEC)).